The chain runs to 274 residues: Large ribosomal subunit protein uL2cz (274 aa).

2 disordered regions span residues 1 to 25 (MAIH…VKSN) and 224 to 274 (NPVD…RRSK). The span at 7 to 25 (KTSTPSTRNGTVDSQVKSN) shows a compositional bias: polar residues.

The protein belongs to the universal ribosomal protein uL2 family. As to quaternary structure, part of the 50S ribosomal subunit.

It is found in the plastid. Its subcellular location is the chloroplast. This chain is Large ribosomal subunit protein uL2cz (rpl2-A), found in Coffea arabica (Arabian coffee).